The chain runs to 229 residues: Heptaprenylglyceryl phosphate synthase (229 aa).

Residue K12 coordinates sn-glycerol 1-phosphate. 2 residues coordinate Mg(2+): D14 and S40. Sn-glycerol 1-phosphate-binding positions include 159–164, G189, and 209–210; these read YLEYSG and GN.

It belongs to the GGGP/HepGP synthase family. Group I subfamily. In terms of assembly, homodimer. It depends on Mg(2+) as a cofactor.

It catalyses the reaction sn-glycerol 1-phosphate + all-trans-heptaprenyl diphosphate = 3-heptaprenyl-sn-glycero-1-phosphate + diphosphate. Its pathway is membrane lipid metabolism; glycerophospholipid metabolism. Its function is as follows. Prenyltransferase that catalyzes in vivo the transfer of the heptaprenyl moiety of heptaprenyl pyrophosphate (HepPP; 35 carbon atoms) to the C3 hydroxyl of sn-glycerol-1-phosphate (G1P), producing heptaprenylglyceryl phosphate (HepGP). This reaction is an ether-bond-formation step in the biosynthesis of archaea-type G1P-based membrane lipids found in Bacillales. This chain is Heptaprenylglyceryl phosphate synthase, found in Bacillus mycoides (strain KBAB4) (Bacillus weihenstephanensis).